Here is a 1230-residue protein sequence, read N- to C-terminus: Ubiquitin carboxyl-terminal hydrolase 15 (1230 aa).

The MATH domain maps to 39–179; that stretch reads EDSFTWNIPD…EGTLNITAYV (141 aa). The region spanning 205-536 is the USP domain; it reads VGFRNQGATC…SAYMLVYIRQ (332 aa). Cys214 acts as the Nucleophile in catalysis. His465 (proton acceptor) is an active-site residue.

The protein belongs to the peptidase C19 family. In terms of assembly, interacts with PEX6; promoting association with the PEX1-PEX6 ATPase complex.

It is found in the cytoplasm. It localises to the cytosol. The protein resides in the peroxisome. The enzyme catalyses Thiol-dependent hydrolysis of ester, thioester, amide, peptide and isopeptide bonds formed by the C-terminal Gly of ubiquitin (a 76-residue protein attached to proteins as an intracellular targeting signal).. Deubiquitinase involved in peroxisome import by mediating deubiquitination of the peroxisomal import receptor PEX5. Catalyzes deubiquitination of both monoubiquitiated and polyubiquitinated forms of PEX5 following its retrotranslocation into the cytosol, resetting PEX5 for a subsequent import cycle. This is Ubiquitin carboxyl-terminal hydrolase 15 from Saccharomyces cerevisiae (strain ATCC 204508 / S288c) (Baker's yeast).